A 318-amino-acid polypeptide reads, in one-letter code: Olfactory receptor 5G26 (318 aa).

The Extracellular portion of the chain corresponds to 1–28 (MMHRNQTVVTEFFFTGLTSSFHLQIVLF). An N-linked (GlcNAc...) asparagine glycan is attached at Asn5. A helical membrane pass occupies residues 29-49 (LTFLCVYLATLLGNLGMIILI). Residues 50–56 (HLDTRLH) lie on the Cytoplasmic side of the membrane. The helical transmembrane segment at 57–77 (IPMYFFLSHLSFVDACSSSVI) threads the bilayer. The Extracellular segment spans residues 78 to 93 (SPKMLSDMFVDKKVIS). Residues 94 to 114 (FLGCAIQLCLFSQFVVTECFL) form a helical membrane-spanning segment. A disulfide bridge links Cys97 with Cys189. The Cytoplasmic portion of the chain corresponds to 115-144 (LASMAYDRYVAICKPLLYTLIMSQRVCVQL). A helical membrane pass occupies residues 145–165 (VIGPYSIGFVSTMVHIISAFV). Topologically, residues 166–198 (LPYCGPNLINHFFCDLLPVLSLACANTQMKKRL) are extracellular. A helical transmembrane segment spans residues 199–219 (LFIVAGILGVFSGIIILVSYV). Topologically, residues 220-239 (YIAITILKISSADGRRKAFS) are cytoplasmic. Residues 240–260 (TCSSHLTAVSILYGTLFFIYV) traverse the membrane as a helical segment. Residues 261–271 (RPSSSFSLDIN) lie on the Extracellular side of the membrane. The chain crosses the membrane as a helical span at residues 272–292 (KVVSLFYTTVIPMLNPFIYSL). The Cytoplasmic portion of the chain corresponds to 293-318 (RNKEVKDALIRTFEKQFCYSFQDKIL).

It belongs to the G-protein coupled receptor 1 family.

It localises to the cell membrane. In terms of biological role, potential odorant receptor. The sequence is that of Olfactory receptor 5G26 from Mus musculus (Mouse).